The following is a 313-amino-acid chain: 4-hydroxy-3-methylbut-2-enyl diphosphate reductase (313 aa).

Cysteine 12 is a binding site for [4Fe-4S] cluster. (2E)-4-hydroxy-3-methylbut-2-enyl diphosphate is bound by residues histidine 41 and histidine 74. Dimethylallyl diphosphate-binding residues include histidine 41 and histidine 74. Residues histidine 41 and histidine 74 each coordinate isopentenyl diphosphate. Cysteine 96 is a binding site for [4Fe-4S] cluster. Histidine 124 contacts (2E)-4-hydroxy-3-methylbut-2-enyl diphosphate. Histidine 124 serves as a coordination point for dimethylallyl diphosphate. Residue histidine 124 participates in isopentenyl diphosphate binding. The Proton donor role is filled by glutamate 126. Threonine 164 is a (2E)-4-hydroxy-3-methylbut-2-enyl diphosphate binding site. [4Fe-4S] cluster is bound at residue cysteine 194. (2E)-4-hydroxy-3-methylbut-2-enyl diphosphate-binding residues include serine 222, serine 223, asparagine 224, and serine 266. 4 residues coordinate dimethylallyl diphosphate: serine 222, serine 223, asparagine 224, and serine 266. The isopentenyl diphosphate site is built by serine 222, serine 223, asparagine 224, and serine 266.

The protein belongs to the IspH family. [4Fe-4S] cluster is required as a cofactor.

The catalysed reaction is isopentenyl diphosphate + 2 oxidized [2Fe-2S]-[ferredoxin] + H2O = (2E)-4-hydroxy-3-methylbut-2-enyl diphosphate + 2 reduced [2Fe-2S]-[ferredoxin] + 2 H(+). It catalyses the reaction dimethylallyl diphosphate + 2 oxidized [2Fe-2S]-[ferredoxin] + H2O = (2E)-4-hydroxy-3-methylbut-2-enyl diphosphate + 2 reduced [2Fe-2S]-[ferredoxin] + 2 H(+). The protein operates within isoprenoid biosynthesis; dimethylallyl diphosphate biosynthesis; dimethylallyl diphosphate from (2E)-4-hydroxy-3-methylbutenyl diphosphate: step 1/1. It participates in isoprenoid biosynthesis; isopentenyl diphosphate biosynthesis via DXP pathway; isopentenyl diphosphate from 1-deoxy-D-xylulose 5-phosphate: step 6/6. Functionally, catalyzes the conversion of 1-hydroxy-2-methyl-2-(E)-butenyl 4-diphosphate (HMBPP) into a mixture of isopentenyl diphosphate (IPP) and dimethylallyl diphosphate (DMAPP). Acts in the terminal step of the DOXP/MEP pathway for isoprenoid precursor biosynthesis. The polypeptide is 4-hydroxy-3-methylbut-2-enyl diphosphate reductase (Protochlamydia amoebophila (strain UWE25)).